We begin with the raw amino-acid sequence, 643 residues long: Phosphatidylinositol-3,5-bisphosphate 3-phosphatase MTMR2 (643 aa).

Composition is skewed to polar residues over residues 1–12 (MEKSSSCESLGS) and 23–40 (DSLS…VHTK). The disordered stretch occupies residues 1-56 (MEKSSSCESLGSQPAAARPPSVDSLSSASTSHSENSVHTKSASVVSSDSISTSADN). Residues serine 6 and serine 9 each carry the phosphoserine modification. The span at 41 to 55 (SASVVSSDSISTSAD) shows a compositional bias: low complexity. At serine 58 the chain carries Phosphoserine. Residues 68–139 (NKLAEMEEPP…GVINRVEKIG (72 aa)) enclose the GRAM domain. The Myotubularin phosphatase domain maps to 205–580 (GWKLYDPLLE…RHLELWVGYY (376 aa)). A 1,2-diacyl-sn-glycero-3-phospho-(1D-myo-inositol-3,5-bisphosphate) is bound by residues asparagine 330, asparagine 355, and isoleucine 356. 3 residues coordinate a 1,2-diacyl-sn-glycero-3-phospho-(1D-myo-inositol-3-phosphate): asparagine 330, asparagine 355, and isoleucine 356. The active-site Phosphocysteine intermediate is cysteine 417. A 1,2-diacyl-sn-glycero-3-phospho-(1D-myo-inositol-3,5-bisphosphate) is bound by residues serine 418, aspartate 419, glycine 420, tryptophan 421, aspartate 422, arginine 423, arginine 459, and arginine 463. A 1,2-diacyl-sn-glycero-3-phospho-(1D-myo-inositol-3-phosphate) is bound by residues serine 418, aspartate 419, glycine 420, tryptophan 421, aspartate 422, and arginine 423. Arginine 463 contacts a 1,2-diacyl-sn-glycero-3-phospho-(1D-myo-inositol-3-phosphate). Positions 593–627 (IHNRYKELLAKRAELQKKVEELQREISNRSTSSSE) form a coiled coil. Residues 615–643 (QREISNRSTSSSERASSPAQCVTPVQTVV) form a disordered region. A compositionally biased stretch (low complexity) spans 620–631 (NRSTSSSERASS). The segment covering 632 to 643 (PAQCVTPVQTVV) has biased composition (polar residues).

Belongs to the protein-tyrosine phosphatase family. Non-receptor class myotubularin subfamily. As to quaternary structure, homodimer (via coiled-coil domain). Heterotetramer consisting of one MTMR2 dimer and one SBF2/MTMR13 dimer; specifically in peripheral nerves stabilizes SBF2/MTMR13 at the membranes and increases MTMR2 catalytic activity towards phosphatidylinositol 3,5-bisphosphate and to a lesser extent towards phosphatidylinositol 3-phosphate. Heterodimer with SBF1/MTMR5; acts as an adapter for the phosphatase MTMR2 to regulate MTMR2 catalytic activity and subcellular location. Heterodimer with MTMR12. Phosphorylation at Ser-58 decreases MTMR2 localization to endocytic vesicular structures.

It localises to the cytoplasm. Its subcellular location is the early endosome membrane. The protein resides in the perinuclear region. The protein localises to the cell projection. It is found in the axon. It localises to the endosome membrane. It carries out the reaction a 1,2-diacyl-sn-glycero-3-phospho-(1D-myo-inositol-3,5-bisphosphate) + H2O = a 1,2-diacyl-sn-glycero-3-phospho-(1D-myo-inositol-5-phosphate) + phosphate. It catalyses the reaction a 1,2-diacyl-sn-glycero-3-phospho-(1D-myo-inositol-3-phosphate) + H2O = a 1,2-diacyl-sn-glycero-3-phospho-(1D-myo-inositol) + phosphate. The enzyme catalyses 1,2-dioctanoyl-sn-glycero-3-phospho-(1-D-myo-inositol-3-phosphate) + H2O = 1,2-dioctanoyl-sn-glycero-3-phospho-(1D-myo-inositol) + phosphate. The catalysed reaction is 1,2-dioctanoyl-sn-glycero-3-phospho-(1D-myo-inositol-3,5-bisphosphate) + H2O = 1,2-dioctanoyl-sn-glycero-3-phospho-(1D-myo-inositol-5-phosphate) + phosphate. Lipid phosphatase that specifically dephosphorylates the D-3 position of phosphatidylinositol 3-phosphate and phosphatidylinositol 3,5-bisphosphate, generating phosphatidylinositol and phosphatidylinositol 5-phosphate. Regulates the level of these phosphoinositides critical for various biological processes including autophagy initiation and autophagosome maturation. The sequence is that of Phosphatidylinositol-3,5-bisphosphate 3-phosphatase MTMR2 from Homo sapiens (Human).